We begin with the raw amino-acid sequence, 103 residues long: Putative glutaredoxin-C14 (103 aa).

Residues 1–102 (MDRVMKLASE…PMLKNAGALW (102 aa)) form the Glutaredoxin domain. An intrachain disulfide couples cysteine 21 to cysteine 24. A Responsive for interaction with TGA factors motif is present at residues 100 to 103 (ALWL).

The protein belongs to the glutaredoxin family. CC-type subfamily.

Its subcellular location is the cytoplasm. It localises to the nucleus. Functionally, has a glutathione-disulfide oxidoreductase activity in the presence of NADPH and glutathione reductase. Reduces low molecular weight disulfides and proteins. The chain is Putative glutaredoxin-C14 (GRXC14) from Oryza sativa subsp. japonica (Rice).